Here is a 307-residue protein sequence, read N- to C-terminus: MASTSTSTQPSGWRHTASQYAALTKPRVTQLAVFCAVIGMFLATPGMVPWPVLIGGAVGIWLFAGAAFAINCLVERKIDAMMRRTAWRPSASGELGARQILLFSLVLGGAGMWTLHVFANDLTMWLTFATFIGYAIIYTLLLKPATPQNIVIGGLSGAMPPALGWAAVANSVPAEAWILVLIIFTWTPPHFWALALYRRADYAKSGLPMLPITHGEKFTLLHILLYTLIMVAATILPFVHGMSGYLYLAVALVLGFGFLVHAWRMYRNYSDALAQKTFRYSIVYLSLLFAALLIDHYFKFGPQGAAL.

The next 9 membrane-spanning stretches (helical) occupy residues 28 to 48 (VTQL…PGMV), 50 to 70 (WPVL…AFAI), 100 to 120 (ILLF…VFAN), 122 to 142 (LTMW…TLLL), 149 to 169 (NIVI…AAVA), 176 to 196 (AWIL…ALAL), 218 to 238 (FTLL…ILPF), 243 to 263 (SGYL…VHAW), and 282 to 302 (IVYL…KFGP).

The protein belongs to the UbiA prenyltransferase family. Protoheme IX farnesyltransferase subfamily.

It localises to the cell inner membrane. The enzyme catalyses heme b + (2E,6E)-farnesyl diphosphate + H2O = Fe(II)-heme o + diphosphate. It functions in the pathway porphyrin-containing compound metabolism; heme O biosynthesis; heme O from protoheme: step 1/1. Functionally, converts heme B (protoheme IX) to heme O by substitution of the vinyl group on carbon 2 of heme B porphyrin ring with a hydroxyethyl farnesyl side group. This chain is Protoheme IX farnesyltransferase, found in Ralstonia nicotianae (strain ATCC BAA-1114 / GMI1000) (Ralstonia solanacearum).